Consider the following 369-residue polypeptide: Phospho-N-acetylmuramoyl-pentapeptide-transferase (369 aa).

10 helical membrane passes run 2-22, 55-75, 86-106, 120-140, 163-183, 196-216, 239-259, 266-286, 291-311, and 348-368; these read IALLIGAGLALLCALVGTPLF, TVVVAAVLLSYGLTHLIMFLM, ALILLFLMVGMGLVGFLDDFI, AKLILQAAVGVIFAVLALNFP, LAFGGTVLGAILFVVWSNLIV, LDGLAAGASVMVFGAYTLMGI, PLDLALLAAIMSAALVGFLWW, IFMGDTGSLAIGGAIAGFAIL, LLLGIIGGLFVLITLSVIIQV, and ILGGLFVAVGLGIFYAEWVVL.

The protein belongs to the glycosyltransferase 4 family. MraY subfamily. Mg(2+) is required as a cofactor.

It localises to the cell membrane. The catalysed reaction is UDP-N-acetyl-alpha-D-muramoyl-L-alanyl-gamma-D-glutamyl-meso-2,6-diaminopimeloyl-D-alanyl-D-alanine + di-trans,octa-cis-undecaprenyl phosphate = di-trans,octa-cis-undecaprenyl diphospho-N-acetyl-alpha-D-muramoyl-L-alanyl-D-glutamyl-meso-2,6-diaminopimeloyl-D-alanyl-D-alanine + UMP. It participates in cell wall biogenesis; peptidoglycan biosynthesis. Catalyzes the initial step of the lipid cycle reactions in the biosynthesis of the cell wall peptidoglycan: transfers peptidoglycan precursor phospho-MurNAc-pentapeptide from UDP-MurNAc-pentapeptide onto the lipid carrier undecaprenyl phosphate, yielding undecaprenyl-pyrophosphoryl-MurNAc-pentapeptide, known as lipid I. The polypeptide is Phospho-N-acetylmuramoyl-pentapeptide-transferase (Pseudarthrobacter chlorophenolicus (strain ATCC 700700 / DSM 12829 / CIP 107037 / JCM 12360 / KCTC 9906 / NCIMB 13794 / A6) (Arthrobacter chlorophenolicus)).